The primary structure comprises 101 residues: Small ribosomal subunit protein uS14 (101 aa).

The protein belongs to the universal ribosomal protein uS14 family. In terms of assembly, part of the 30S ribosomal subunit. Contacts proteins S3 and S10.

Its function is as follows. Binds 16S rRNA, required for the assembly of 30S particles and may also be responsible for determining the conformation of the 16S rRNA at the A site. This Actinobacillus pleuropneumoniae serotype 5b (strain L20) protein is Small ribosomal subunit protein uS14.